A 940-amino-acid chain; its full sequence is Isoleucine--tRNA ligase (940 aa).

The short motif at 58–68 is the 'HIGH' region element; sequence PYANGSIHIGH. Glu-564 is a binding site for L-isoleucyl-5'-AMP. The 'KMSKS' region signature appears at 605–609; it reads KMSKS. Lys-608 serves as a coordination point for ATP. Positions 903, 906, 923, and 926 each coordinate Zn(2+).

This sequence belongs to the class-I aminoacyl-tRNA synthetase family. IleS type 1 subfamily. As to quaternary structure, monomer. The cofactor is Zn(2+).

Its subcellular location is the cytoplasm. It carries out the reaction tRNA(Ile) + L-isoleucine + ATP = L-isoleucyl-tRNA(Ile) + AMP + diphosphate. Catalyzes the attachment of isoleucine to tRNA(Ile). As IleRS can inadvertently accommodate and process structurally similar amino acids such as valine, to avoid such errors it has two additional distinct tRNA(Ile)-dependent editing activities. One activity is designated as 'pretransfer' editing and involves the hydrolysis of activated Val-AMP. The other activity is designated 'posttransfer' editing and involves deacylation of mischarged Val-tRNA(Ile). In Shewanella baltica (strain OS155 / ATCC BAA-1091), this protein is Isoleucine--tRNA ligase.